Here is a 326-residue protein sequence, read N- to C-terminus: tRNA-modifying protein YgfZ (326 aa).

Folate contacts are provided by W27 and W189.

It belongs to the tRNA-modifying YgfZ family.

The protein resides in the cytoplasm. Functionally, folate-binding protein involved in regulating the level of ATP-DnaA and in the modification of some tRNAs. It is probably a key factor in regulatory networks that act via tRNA modification, such as initiation of chromosomal replication. In Shigella dysenteriae serotype 1 (strain Sd197), this protein is tRNA-modifying protein YgfZ.